A 698-amino-acid chain; its full sequence is Elongation factor G 1 (698 aa).

The region spanning 8-290 is the tr-type G domain; the sequence is ERYRNIGICA…AVVEFLPAPV (283 aa). GTP-binding positions include 17–24, 88–92, and 142–145; these read AHVDAGKT, DTPGH, and NKMD.

It belongs to the TRAFAC class translation factor GTPase superfamily. Classic translation factor GTPase family. EF-G/EF-2 subfamily.

The protein localises to the cytoplasm. In terms of biological role, catalyzes the GTP-dependent ribosomal translocation step during translation elongation. During this step, the ribosome changes from the pre-translocational (PRE) to the post-translocational (POST) state as the newly formed A-site-bound peptidyl-tRNA and P-site-bound deacylated tRNA move to the P and E sites, respectively. Catalyzes the coordinated movement of the two tRNA molecules, the mRNA and conformational changes in the ribosome. In Shewanella oneidensis (strain ATCC 700550 / JCM 31522 / CIP 106686 / LMG 19005 / NCIMB 14063 / MR-1), this protein is Elongation factor G 1.